Reading from the N-terminus, the 427-residue chain is Large ribosomal subunit protein uL4 (427 aa).

Position 2 is an N-acetylalanine (Ala2). Lys14 is modified (N6-acetyllysine). Arg97 carries the post-translational modification Omega-N-methylarginine. The residue at position 106 (Lys106) is an N6-acetyllysine. Lys239 participates in a covalent cross-link: Glycyl lysine isopeptide (Lys-Gly) (interchain with G-Cter in SUMO2). The residue at position 259 (Lys259) is an N6-acetyllysine. A Phosphothreonine modification is found at Thr266. Ser290 and Ser295 each carry phosphoserine. Arg300 carries the citrulline modification. Lys327 is covalently cross-linked (Glycyl lysine isopeptide (Lys-Gly) (interchain with G-Cter in SUMO2)). N6-acetyllysine occurs at positions 333 and 353. Lys364 is modified (N6-acetyllysine; alternate). Lys364 participates in a covalent cross-link: Glycyl lysine isopeptide (Lys-Gly) (interchain with G-Cter in SUMO1); alternate. Position 365 is a phosphoserine (Ser365). The disordered stretch occupies residues 369–427 (AAVAGKKPVVGKKGKKAAVGVKKQKKPLVGKKAAATKKPAPEKKPAEKKPTTEEKKPAA). Over residues 377 to 397 (VVGKKGKKAAVGVKKQKKPLV) the composition is skewed to basic residues. Positions 407–427 (PAPEKKPAEKKPTTEEKKPAA) are enriched in basic and acidic residues.

Belongs to the universal ribosomal protein uL4 family. As to quaternary structure, component of the large ribosomal subunit. May bind IPO9 with low affinity. Interacts with RBM3. Citrullinated by PADI4.

The protein resides in the cytoplasm. Component of the large ribosomal subunit. The ribosome is a large ribonucleoprotein complex responsible for the synthesis of proteins in the cell. The polypeptide is Large ribosomal subunit protein uL4 (RPL4) (Homo sapiens (Human)).